Reading from the N-terminus, the 334-residue chain is Holliday junction branch migration complex subunit RuvB (334 aa).

Residues 4-184 are large ATPase domain (RuvB-L); that stretch reads ADRLIQPQLQ…FGIPLRLEFY (181 aa). Residues arginine 24, glycine 65, lysine 68, threonine 69, threonine 70, 131–133, arginine 174, tyrosine 184, and arginine 221 each bind ATP; that span reads EDY. Position 69 (threonine 69) interacts with Mg(2+). Positions 185-255 are small ATPAse domain (RuvB-S); the sequence is NVKDLSTIVT…VAEHALDLLD (71 aa). Residues 258–334 are head domain (RuvB-H); sequence GEGFDYMDRK…YLHFGMIKPE (77 aa). 3 residues coordinate DNA: arginine 294, arginine 313, and arginine 318.

It belongs to the RuvB family. Homohexamer. Forms an RuvA(8)-RuvB(12)-Holliday junction (HJ) complex. HJ DNA is sandwiched between 2 RuvA tetramers; dsDNA enters through RuvA and exits via RuvB. An RuvB hexamer assembles on each DNA strand where it exits the tetramer. Each RuvB hexamer is contacted by two RuvA subunits (via domain III) on 2 adjacent RuvB subunits; this complex drives branch migration. In the full resolvosome a probable DNA-RuvA(4)-RuvB(12)-RuvC(2) complex forms which resolves the HJ.

It is found in the cytoplasm. It catalyses the reaction ATP + H2O = ADP + phosphate + H(+). In terms of biological role, the RuvA-RuvB-RuvC complex processes Holliday junction (HJ) DNA during genetic recombination and DNA repair, while the RuvA-RuvB complex plays an important role in the rescue of blocked DNA replication forks via replication fork reversal (RFR). RuvA specifically binds to HJ cruciform DNA, conferring on it an open structure. The RuvB hexamer acts as an ATP-dependent pump, pulling dsDNA into and through the RuvAB complex. RuvB forms 2 homohexamers on either side of HJ DNA bound by 1 or 2 RuvA tetramers; 4 subunits per hexamer contact DNA at a time. Coordinated motions by a converter formed by DNA-disengaged RuvB subunits stimulates ATP hydrolysis and nucleotide exchange. Immobilization of the converter enables RuvB to convert the ATP-contained energy into a lever motion, pulling 2 nucleotides of DNA out of the RuvA tetramer per ATP hydrolyzed, thus driving DNA branch migration. The RuvB motors rotate together with the DNA substrate, which together with the progressing nucleotide cycle form the mechanistic basis for DNA recombination by continuous HJ branch migration. Branch migration allows RuvC to scan DNA until it finds its consensus sequence, where it cleaves and resolves cruciform DNA. The chain is Holliday junction branch migration complex subunit RuvB from Shewanella sp. (strain MR-4).